The sequence spans 556 residues: 2-succinyl-5-enolpyruvyl-6-hydroxy-3-cyclohexene-1-carboxylate synthase (556 aa).

Belongs to the TPP enzyme family. MenD subfamily. Homodimer. It depends on Mg(2+) as a cofactor. The cofactor is Mn(2+). Thiamine diphosphate serves as cofactor.

It catalyses the reaction isochorismate + 2-oxoglutarate + H(+) = 5-enolpyruvoyl-6-hydroxy-2-succinyl-cyclohex-3-ene-1-carboxylate + CO2. Its pathway is quinol/quinone metabolism; 1,4-dihydroxy-2-naphthoate biosynthesis; 1,4-dihydroxy-2-naphthoate from chorismate: step 2/7. It participates in quinol/quinone metabolism; menaquinone biosynthesis. In terms of biological role, catalyzes the thiamine diphosphate-dependent decarboxylation of 2-oxoglutarate and the subsequent addition of the resulting succinic semialdehyde-thiamine pyrophosphate anion to isochorismate to yield 2-succinyl-5-enolpyruvyl-6-hydroxy-3-cyclohexene-1-carboxylate (SEPHCHC). This Escherichia coli O8 (strain IAI1) protein is 2-succinyl-5-enolpyruvyl-6-hydroxy-3-cyclohexene-1-carboxylate synthase.